The following is a 332-amino-acid chain: Ketol-acid reductoisomerase (NADP(+)) (332 aa).

In terms of domain architecture, KARI N-terminal Rossmann spans 4–184; the sequence is ARMYYDEDAD…GGTRAGILET (181 aa). NADP(+) is bound by residues 27 to 30, S53, S55, and 85 to 88; these read YGSQ and DEVQ. Residue H110 is part of the active site. Position 136 (G136) interacts with NADP(+). One can recognise a KARI C-terminal knotted domain in the interval 185-330; the sequence is TFREEAETDL…ADLRKMMSWL (146 aa). Mg(2+) is bound by residues D193, E197, E229, and E233. Residue S254 coordinates substrate.

This sequence belongs to the ketol-acid reductoisomerase family. Requires Mg(2+) as cofactor.

The enzyme catalyses (2R)-2,3-dihydroxy-3-methylbutanoate + NADP(+) = (2S)-2-acetolactate + NADPH + H(+). It catalyses the reaction (2R,3R)-2,3-dihydroxy-3-methylpentanoate + NADP(+) = (S)-2-ethyl-2-hydroxy-3-oxobutanoate + NADPH + H(+). The protein operates within amino-acid biosynthesis; L-isoleucine biosynthesis; L-isoleucine from 2-oxobutanoate: step 2/4. Its pathway is amino-acid biosynthesis; L-valine biosynthesis; L-valine from pyruvate: step 2/4. Involved in the biosynthesis of branched-chain amino acids (BCAA). Catalyzes an alkyl-migration followed by a ketol-acid reduction of (S)-2-acetolactate (S2AL) to yield (R)-2,3-dihydroxy-isovalerate. In the isomerase reaction, S2AL is rearranged via a Mg-dependent methyl migration to produce 3-hydroxy-3-methyl-2-ketobutyrate (HMKB). In the reductase reaction, this 2-ketoacid undergoes a metal-dependent reduction by NADPH to yield (R)-2,3-dihydroxy-isovalerate. This chain is Ketol-acid reductoisomerase (NADP(+)), found in Gloeobacter violaceus (strain ATCC 29082 / PCC 7421).